A 175-amino-acid chain; its full sequence is O-acetyl-ADP-ribose deacetylase (175 aa).

The Macro domain maps to 1 to 175 (MAVQPEVILG…IYRRLLASYP (175 aa)). Substrate contacts are provided by residues 11-12 (DI), Asn-25, 33-35 (GVD), and 122-126 (STGVY). Asp-35 serves as the catalytic Proton acceptor.

It belongs to the MacroD-type family. YmdB subfamily. As to quaternary structure, homodimer. Interacts with RNase III.

It carries out the reaction 3''-O-acetyl-ADP-D-ribose + H2O = ADP-D-ribose + acetate + H(+). The catalysed reaction is 2''-O-acetyl-ADP-D-ribose + H2O = ADP-D-ribose + acetate + H(+). Deacetylates O-acetyl-ADP ribose to yield ADP-ribose and free acetate. Down-regulates ribonuclease 3 (RNase III) activity. Acts by interacting directly with the region of the ribonuclease that is required for dimerization/activation. In Klebsiella pneumoniae (strain 342), this protein is O-acetyl-ADP-ribose deacetylase.